A 91-amino-acid polypeptide reads, in one-letter code: Small ribosomal subunit protein uS19 (91 aa).

It belongs to the universal ribosomal protein uS19 family.

Its function is as follows. Protein S19 forms a complex with S13 that binds strongly to the 16S ribosomal RNA. The sequence is that of Small ribosomal subunit protein uS19 from Methylibium petroleiphilum (strain ATCC BAA-1232 / LMG 22953 / PM1).